The primary structure comprises 412 residues: uncharacterized protein (412 aa).

Residues phenylalanine 20–glycine 199 form the UmuC domain.

The protein belongs to the DNA polymerase type-Y family.

This is an uncharacterized protein from Mycoplasma pneumoniae (strain ATCC 29342 / M129 / Subtype 1) (Mycoplasmoides pneumoniae).